The following is a 206-amino-acid chain: RNA pyrophosphohydrolase (206 aa).

The region spanning 6 to 150 (GYRPNVGIVI…KRDVYRKVMK (145 aa)) is the Nudix hydrolase domain. Positions 38 to 59 (GGINEGENIETAMYRELYEEVG) match the Nudix box motif. Over residues 162 to 191 (KPETVEKPRVERTEKRDFQKRDNQKREFRK) the composition is skewed to basic and acidic residues. The segment at 162–206 (KPETVEKPRVERTEKRDFQKRDNQKREFRKSARMWNNSHQKGKAQ) is disordered.

The protein belongs to the Nudix hydrolase family. RppH subfamily. It depends on a divalent metal cation as a cofactor.

Accelerates the degradation of transcripts by removing pyrophosphate from the 5'-end of triphosphorylated RNA, leading to a more labile monophosphorylated state that can stimulate subsequent ribonuclease cleavage. The chain is RNA pyrophosphohydrolase from Actinobacillus pleuropneumoniae serotype 7 (strain AP76).